Here is a 319-residue protein sequence, read N- to C-terminus: Acetyl esterase (319 aa).

Positions 91 to 93 (HGG) match the Involved in the stabilization of the negatively charged intermediate by the formation of the oxyanion hole motif. Active-site residues include S165, D262, and H292.

It belongs to the 'GDXG' lipolytic enzyme family. In terms of assembly, homodimer. Interacts with MalT and MelA.

Its subcellular location is the cytoplasm. In terms of biological role, displays esterase activity towards short chain fatty esters (acyl chain length of up to 8 carbons). Able to hydrolyze triacetylglycerol (triacetin) and tributyrylglycerol (tributyrin), but not trioleylglycerol (triolein) or cholesterol oleate. Negatively regulates MalT activity by antagonizing maltotriose binding. Inhibits MelA galactosidase activity. The polypeptide is Acetyl esterase (Escherichia coli O157:H7).